The sequence spans 282 residues: Ribosomal RNA small subunit methyltransferase A (282 aa).

The interval 1–21 (MPDFPKEHATPMSNRPPAHQA) is disordered. 6 residues coordinate S-adenosyl-L-methionine: Asn-28, Leu-30, Gly-55, Glu-76, Asp-101, and Asn-126.

The protein belongs to the class I-like SAM-binding methyltransferase superfamily. rRNA adenine N(6)-methyltransferase family. RsmA subfamily.

It localises to the cytoplasm. The enzyme catalyses adenosine(1518)/adenosine(1519) in 16S rRNA + 4 S-adenosyl-L-methionine = N(6)-dimethyladenosine(1518)/N(6)-dimethyladenosine(1519) in 16S rRNA + 4 S-adenosyl-L-homocysteine + 4 H(+). Its function is as follows. Specifically dimethylates two adjacent adenosines (A1518 and A1519) in the loop of a conserved hairpin near the 3'-end of 16S rRNA in the 30S particle. May play a critical role in biogenesis of 30S subunits. The polypeptide is Ribosomal RNA small subunit methyltransferase A (Chromohalobacter salexigens (strain ATCC BAA-138 / DSM 3043 / CIP 106854 / NCIMB 13768 / 1H11)).